The following is a 155-amino-acid chain: Probable calcium-binding protein CML44 (155 aa).

EF-hand domains follow at residues 6–41 (ITTN…LGWA), 85–120 (DNDE…LGFE), and 130–155 (RMIR…ILHV). Positions 19, 21, 23, 30, 98, 100, 102, 104, and 109 each coordinate Ca(2+).

Its function is as follows. Potential calcium sensor. The sequence is that of Probable calcium-binding protein CML44 (CML44) from Arabidopsis thaliana (Mouse-ear cress).